A 506-amino-acid chain; its full sequence is ATP synthase subunit alpha (506 aa).

171–178 (GDRQTGKT) serves as a coordination point for ATP.

The protein belongs to the ATPase alpha/beta chains family. As to quaternary structure, F-type ATPases have 2 components, CF(1) - the catalytic core - and CF(0) - the membrane proton channel. CF(1) has five subunits: alpha(3), beta(3), gamma(1), delta(1), epsilon(1). CF(0) has four main subunits: a(1), b(1), b'(1) and c(9-12).

It localises to the cellular thylakoid membrane. It catalyses the reaction ATP + H2O + 4 H(+)(in) = ADP + phosphate + 5 H(+)(out). In terms of biological role, produces ATP from ADP in the presence of a proton gradient across the membrane. The alpha chain is a regulatory subunit. This chain is ATP synthase subunit alpha, found in Trichormus variabilis (strain ATCC 29413 / PCC 7937) (Anabaena variabilis).